The following is a 215-amino-acid chain: Adenylate kinase (215 aa).

An ATP-binding site is contributed by 10-15; sequence GAGKGT. An NMP region spans residues 30-59; that stretch reads STGDMFRLAIKEGTELGKKAKEFMDQGDLV. AMP contacts are provided by residues threonine 31, arginine 36, 57-59, 85-88, and glutamine 92; these read DLV and GFPR. Positions 126-163 are LID; that stretch reads GRRICPTCGTAYHVVYNPPKEEGICDKDGSQLIQRDDD. Arginine 127 is an ATP binding site. The Zn(2+) site is built by cysteine 130, cysteine 133, cysteine 150, and aspartate 153. The AMP site is built by arginine 160 and arginine 171. Residue arginine 199 participates in ATP binding.

It belongs to the adenylate kinase family. As to quaternary structure, monomer.

Its subcellular location is the cytoplasm. The enzyme catalyses AMP + ATP = 2 ADP. Its pathway is purine metabolism; AMP biosynthesis via salvage pathway; AMP from ADP: step 1/1. In terms of biological role, catalyzes the reversible transfer of the terminal phosphate group between ATP and AMP. Plays an important role in cellular energy homeostasis and in adenine nucleotide metabolism. In Oceanobacillus iheyensis (strain DSM 14371 / CIP 107618 / JCM 11309 / KCTC 3954 / HTE831), this protein is Adenylate kinase.